We begin with the raw amino-acid sequence, 353 residues long: S-adenosylmethionine:tRNA ribosyltransferase-isomerase (353 aa).

The protein belongs to the QueA family. In terms of assembly, monomer.

The protein resides in the cytoplasm. The enzyme catalyses 7-aminomethyl-7-carbaguanosine(34) in tRNA + S-adenosyl-L-methionine = epoxyqueuosine(34) in tRNA + adenine + L-methionine + 2 H(+). It participates in tRNA modification; tRNA-queuosine biosynthesis. Its function is as follows. Transfers and isomerizes the ribose moiety from AdoMet to the 7-aminomethyl group of 7-deazaguanine (preQ1-tRNA) to give epoxyqueuosine (oQ-tRNA). In Paraburkholderia phymatum (strain DSM 17167 / CIP 108236 / LMG 21445 / STM815) (Burkholderia phymatum), this protein is S-adenosylmethionine:tRNA ribosyltransferase-isomerase.